The primary structure comprises 424 residues: Light-independent protochlorophyllide reductase subunit N (424 aa).

[4Fe-4S] cluster-binding residues include C26, C51, and C112.

The protein belongs to the BchN/ChlN family. As to quaternary structure, protochlorophyllide reductase is composed of three subunits; BchL, BchN and BchB. Forms a heterotetramer of two BchB and two BchN subunits. The cofactor is [4Fe-4S] cluster.

The catalysed reaction is chlorophyllide a + oxidized 2[4Fe-4S]-[ferredoxin] + 2 ADP + 2 phosphate = protochlorophyllide a + reduced 2[4Fe-4S]-[ferredoxin] + 2 ATP + 2 H2O. It functions in the pathway porphyrin-containing compound metabolism; bacteriochlorophyll biosynthesis (light-independent). Functionally, component of the dark-operative protochlorophyllide reductase (DPOR) that uses Mg-ATP and reduced ferredoxin to reduce ring D of protochlorophyllide (Pchlide) to form chlorophyllide a (Chlide). This reaction is light-independent. The NB-protein (BchN-BchB) is the catalytic component of the complex. The sequence is that of Light-independent protochlorophyllide reductase subunit N from Rhodobacter capsulatus (strain ATCC BAA-309 / NBRC 16581 / SB1003).